The following is a 444-amino-acid chain: Glycine receptor subunit alphaZ1 (444 aa).

A signal peptide spans Met1–Ala24. Topologically, residues Ala25–Tyr246 are extracellular. Residue Asn62 is glycosylated (N-linked (GlcNAc...) asparagine). Glycine contacts are provided by Arg89 and Ser153. Cys162 and Cys176 are disulfide-bonded. Residues Glu216 and Asp218 each coordinate Zn(2+). Cys222 and Cys233 are disulfide-bonded. Position 226–231 (Tyr226–Phe231) interacts with strychnine. Thr228 serves as a coordination point for glycine. His239 provides a ligand contact to Zn(2+). The chain crosses the membrane as a helical span at residues Tyr247–Ile268. The Cytoplasmic segment spans residues Asn269–Ala273. Residues Pro274–Ser294 traverse the membrane as a helical segment. The Extracellular segment spans residues Arg295–Lys305. A helical transmembrane segment spans residues Ala306 to Ala326. The Cytoplasmic portion of the chain corresponds to Ala327 to Thr412. The chain crosses the membrane as a helical span at residues Val413–Tyr433. Residues Lys434–Gln444 are Extracellular-facing.

This sequence belongs to the ligand-gated ion channel (TC 1.A.9) family. Glycine receptor (TC 1.A.9.3) subfamily. GLRA1 sub-subfamily. As to quaternary structure, homopentamer (in vitro). Heteropentamer composed of glra1 and glrb. Both homopentamers and heteropentamers form functional ion channels. Interacts with glrb. In terms of tissue distribution, expressed in brain.

It is found in the postsynaptic cell membrane. It localises to the synapse. The protein resides in the perikaryon. Its subcellular location is the cell projection. The protein localises to the dendrite. It is found in the cell membrane. It carries out the reaction chloride(in) = chloride(out). With respect to regulation, activated by glycine and taurine. Inhibited by strychnine. Allosterically activated by ivermectin. Inhibited by picrotoxinin. Strychnine binding locks the channel in a closed conformation and prevents channel opening in response to extracellular glycine. Can also be activated by GABA and inhibited by bicuculline, but this requires heterologous expression in human cells. Its function is as follows. Subunit of heteromeric glycine-gated chloride channels. Plays an important role in the down-regulation of neuronal excitability. Contributes to the generation of inhibitory postsynaptic currents. Channel activity is potentiated by ethanol. The polypeptide is Glycine receptor subunit alphaZ1 (glra1) (Danio rerio (Zebrafish)).